Reading from the N-terminus, the 45-residue chain is Photosystem II reaction center protein K (45 aa).

The propeptide occupies 1-8 (METALLLA). The chain crosses the membrane as a helical span at residues 24–44 (LPLIPLFFLLLAFVWQASVGF).

This sequence belongs to the PsbK family. As to quaternary structure, PSII is composed of 1 copy each of membrane proteins PsbA, PsbB, PsbC, PsbD, PsbE, PsbF, PsbH, PsbI, PsbJ, PsbK, PsbL, PsbM, PsbT, PsbX, PsbY, PsbZ, Psb30/Ycf12, peripheral proteins PsbO, CyanoQ (PsbQ), PsbU, PsbV and a large number of cofactors. It forms dimeric complexes.

It localises to the cellular thylakoid membrane. In terms of biological role, one of the components of the core complex of photosystem II (PSII). PSII is a light-driven water:plastoquinone oxidoreductase that uses light energy to abstract electrons from H(2)O, generating O(2) and a proton gradient subsequently used for ATP formation. It consists of a core antenna complex that captures photons, and an electron transfer chain that converts photonic excitation into a charge separation. This chain is Photosystem II reaction center protein K, found in Microcystis aeruginosa (strain NIES-843 / IAM M-2473).